The chain runs to 355 residues: Aromatic amino acid aminotransferase (355 aa).

Residue Lys217 is modified to N6-(pyridoxal phosphate)lysine.

It belongs to the class-II pyridoxal-phosphate-dependent aminotransferase family. Homodimer. The cofactor is pyridoxal 5'-phosphate.

It carries out the reaction an aromatic L-alpha-amino acid + 2-oxoglutarate = an aromatic oxo-acid + L-glutamate. In terms of biological role, aminotransferase that catalyzes the conversion of aromatic amino acids and 2-oxoglutarate into corresponding aromatic oxo acids and L-glutamate. The polypeptide is Aromatic amino acid aminotransferase (Mycobacterium avium (strain 104)).